The following is a 161-amino-acid chain: Peptidyl-prolyl cis-trans isomerase (161 aa).

Residues 6–160 form the PPIase cyclophilin-type domain; that stretch reads FFDIKAGDER…KKIIIEDCGE (155 aa).

It belongs to the cyclophilin-type PPIase family. PPIase A subfamily. In terms of tissue distribution, found mainly in the tegument, gut epithelium, and muscle layers. Also found in the interior of the parasite.

The enzyme catalyses [protein]-peptidylproline (omega=180) = [protein]-peptidylproline (omega=0). Binds cyclosporin A (CsA). CsA mediates some of its effects via an inhibitory action on PPIase. Its function is as follows. PPIases accelerate the folding of proteins. It catalyzes the cis-trans isomerization of proline imidic peptide bonds in oligopeptides. This Schistosoma mansoni (Blood fluke) protein is Peptidyl-prolyl cis-trans isomerase.